The primary structure comprises 131 residues: MNLSTGIIFCFLILGVSSQRWGTFLKEAGQGAKDMWRAYQDMKEANYRGADKYFHARGNYDAARRGPGGAWAAKVISNARETIQGITDPLFKGMTRDQVREDSKADQFANEWGRSGKDPNHFRPAGLPDKY.

Residues 1–18 form the signal peptide; sequence MNLSTGIIFCFLILGVSS. Positions 94–105 are enriched in basic and acidic residues; it reads MTRDQVREDSKA. The disordered stretch occupies residues 94–131; the sequence is MTRDQVREDSKADQFANEWGRSGKDPNHFRPAGLPDKY.

This sequence belongs to the SAA family. In terms of tissue distribution, expressed in the liver. Expressed in mammary epithelial cells. Expressed at high levels in mammary ductal cells and vesicle engorged alveoli, but absent from stromal and connective tissue and leukocytes. Secreted into colostrum and mastitic milk (at protein level). Low expression levels, if any, in normal milk (at protein level).

It localises to the secreted. In terms of biological role, major acute phase reactant. Apolipoprotein of the HDL complex. May have a role in protection of the mammary gland during remodeling and infection. In vitro exhibits antimicrobial activity against Escherichia coli, Streptococcus uberis and Pseudomonas aeruginosa. The protein is Serum amyloid A-3 protein (SAA3) of Bos taurus (Bovine).